The following is a 426-amino-acid chain: Glucose-6-phosphate isomerase (426 aa).

The active-site Proton donor is the Glu-282. Residues His-303 and Lys-419 contribute to the active site.

Belongs to the GPI family.

The protein localises to the cytoplasm. It carries out the reaction alpha-D-glucose 6-phosphate = beta-D-fructose 6-phosphate. The protein operates within carbohydrate biosynthesis; gluconeogenesis. Its pathway is carbohydrate degradation; glycolysis; D-glyceraldehyde 3-phosphate and glycerone phosphate from D-glucose: step 2/4. In terms of biological role, catalyzes the reversible isomerization of glucose-6-phosphate to fructose-6-phosphate. This is Glucose-6-phosphate isomerase from Mycoplasmoides gallisepticum (strain R(low / passage 15 / clone 2)) (Mycoplasma gallisepticum).